We begin with the raw amino-acid sequence, 283 residues long: MEMO1 family protein MK0963 (283 aa).

The protein belongs to the MEMO1 family.

This is MEMO1 family protein MK0963 from Methanopyrus kandleri (strain AV19 / DSM 6324 / JCM 9639 / NBRC 100938).